The sequence spans 244 residues: 5'-deoxynucleotidase (244 aa).

It catalyses the reaction a 2'-deoxyribonucleoside 5'-phosphate + H2O = a 2'-deoxyribonucleoside + phosphate. Following host DNA degradation, is responsible for the degradation of 5'-dNMP's to deoxynucleosides that can be further excreted. Active on deoxynucleoside 5'-monophosphates but not active as a phosphatase on ribonucleotides, deoxynucleoside 5'-triphosphates, deoxynucleoside 3'-monophosphates, or deoxyoligonucleotides. The polypeptide is 5'-deoxynucleotidase (dmp) (Escherichia coli (Enterobacteria phage T5)).